The following is a 495-amino-acid chain: Bifunctional protein GlmU (495 aa).

Positions 1–241 are pyrophosphorylase; sequence MPQQTAVVVL…AAKVTGVNDR (241 aa). UDP-N-acetyl-alpha-D-glucosamine contacts are provided by residues 10–13, Lys24, Gln81, and 86–87; these read LAAG and GT. Position 112 (Asp112) interacts with Mg(2+). UDP-N-acetyl-alpha-D-glucosamine is bound by residues Gly151, Glu166, Asn181, and Asn239. A Mg(2+)-binding site is contributed by Asn239. The interval 242–262 is linker; sequence VQLSIATRTMNRYILERHMRA. An N-acetyltransferase region spans residues 263 to 495; that stretch reads GVTIIDPAST…QATEQKDGEQ (233 aa). Residues Arg344 and Lys362 each contribute to the UDP-N-acetyl-alpha-D-glucosamine site. The Proton acceptor role is filled by His374. UDP-N-acetyl-alpha-D-glucosamine is bound by residues Tyr377 and Asn388. Acetyl-CoA contacts are provided by residues Ala391, 397–398, Ser416, and Ala434; that span reads NY. The segment at 467-495 is disordered; it reads GTAAATAAAQALAADEKSSQATEQKDGEQ. The segment covering 468–479 has biased composition (low complexity); sequence TAAATAAAQALA. Basic and acidic residues predominate over residues 480–495; that stretch reads ADEKSSQATEQKDGEQ.

The protein in the N-terminal section; belongs to the N-acetylglucosamine-1-phosphate uridyltransferase family. This sequence in the C-terminal section; belongs to the transferase hexapeptide repeat family. As to quaternary structure, homotrimer. The cofactor is Mg(2+).

It localises to the cytoplasm. It catalyses the reaction alpha-D-glucosamine 1-phosphate + acetyl-CoA = N-acetyl-alpha-D-glucosamine 1-phosphate + CoA + H(+). It carries out the reaction N-acetyl-alpha-D-glucosamine 1-phosphate + UTP + H(+) = UDP-N-acetyl-alpha-D-glucosamine + diphosphate. Its pathway is nucleotide-sugar biosynthesis; UDP-N-acetyl-alpha-D-glucosamine biosynthesis; N-acetyl-alpha-D-glucosamine 1-phosphate from alpha-D-glucosamine 6-phosphate (route II): step 2/2. The protein operates within nucleotide-sugar biosynthesis; UDP-N-acetyl-alpha-D-glucosamine biosynthesis; UDP-N-acetyl-alpha-D-glucosamine from N-acetyl-alpha-D-glucosamine 1-phosphate: step 1/1. It functions in the pathway bacterial outer membrane biogenesis; LPS lipid A biosynthesis. Functionally, catalyzes the last two sequential reactions in the de novo biosynthetic pathway for UDP-N-acetylglucosamine (UDP-GlcNAc). The C-terminal domain catalyzes the transfer of acetyl group from acetyl coenzyme A to glucosamine-1-phosphate (GlcN-1-P) to produce N-acetylglucosamine-1-phosphate (GlcNAc-1-P), which is converted into UDP-GlcNAc by the transfer of uridine 5-monophosphate (from uridine 5-triphosphate), a reaction catalyzed by the N-terminal domain. This chain is Bifunctional protein GlmU, found in Nocardia farcinica (strain IFM 10152).